The chain runs to 282 residues: Putative quercetin 2,3-dioxygenase VC_A0969 (282 aa).

Residues 1 to 21 (MTKDREIRQTVPAQPTSDGDG) are disordered. The a divalent metal cation site is built by His59, His61, His103, and Glu105.

This sequence belongs to the pirin family. Requires a divalent metal cation as cofactor.

The catalysed reaction is quercetin + O2 = 2-(3,4-dihydroxybenzoyloxy)-4,6-dihydroxybenzoate + CO. Its pathway is flavonoid metabolism; quercetin degradation. Its function is as follows. Putative quercetin 2,3-dioxygenase. This chain is Putative quercetin 2,3-dioxygenase VC_A0969, found in Vibrio cholerae serotype O1 (strain ATCC 39315 / El Tor Inaba N16961).